The chain runs to 143 residues: Transcriptional regulator MraZ (143 aa).

2 consecutive SpoVT-AbrB domains span residues 5-47 (TYTP…PRSE) and 76-119 (TDEQ…DAQA).

It belongs to the MraZ family. As to quaternary structure, forms oligomers.

It is found in the cytoplasm. It localises to the nucleoid. The sequence is that of Transcriptional regulator MraZ from Mycobacterium ulcerans (strain Agy99).